Consider the following 96-residue polypeptide: Small ribosomal subunit protein bS6 (96 aa).

This sequence belongs to the bacterial ribosomal protein bS6 family.

Its function is as follows. Binds together with bS18 to 16S ribosomal RNA. This Mycolicibacterium paratuberculosis (strain ATCC BAA-968 / K-10) (Mycobacterium paratuberculosis) protein is Small ribosomal subunit protein bS6.